The chain runs to 273 residues: Rhamnulose-1-phosphate aldolase (273 aa).

Glu-117 is a catalytic residue. 3 residues coordinate Zn(2+): His-140, His-142, and His-211.

It belongs to the aldolase class II family. RhaD subfamily. It depends on Zn(2+) as a cofactor.

The protein resides in the cytoplasm. The enzyme catalyses L-rhamnulose 1-phosphate = (S)-lactaldehyde + dihydroxyacetone phosphate. The protein operates within carbohydrate degradation; L-rhamnose degradation; glycerone phosphate from L-rhamnose: step 3/3. Functionally, catalyzes the reversible cleavage of L-rhamnulose-1-phosphate to dihydroxyacetone phosphate (DHAP) and L-lactaldehyde. The polypeptide is Rhamnulose-1-phosphate aldolase (Listeria innocua serovar 6a (strain ATCC BAA-680 / CLIP 11262)).